The chain runs to 382 residues: Mannitol-1-phosphate 5-dehydrogenase (382 aa).

Position 3 to 14 (3 to 14) interacts with NAD(+); the sequence is ALHFGAGNIGRG. K269 carries the post-translational modification N6-acetyllysine.

It belongs to the mannitol dehydrogenase family. Monomer.

The catalysed reaction is D-mannitol 1-phosphate + NAD(+) = beta-D-fructose 6-phosphate + NADH + H(+). The sequence is that of Mannitol-1-phosphate 5-dehydrogenase from Escherichia coli O157:H7.